Reading from the N-terminus, the 184-residue chain is Large ribosomal subunit protein uL5c (184 aa).

It belongs to the universal ribosomal protein uL5 family. In terms of assembly, part of the 50S ribosomal subunit; contacts the 5S rRNA.

The protein localises to the plastid. It localises to the chloroplast. Its function is as follows. Binds 5S rRNA, forms part of the central protuberance of the 50S subunit. The polypeptide is Large ribosomal subunit protein uL5c (rpl5) (Mesostigma viride (Green alga)).